Consider the following 313-residue polypeptide: Formimidoylglutamase (313 aa).

Residues H130, D155, H157, D159, D241, and D243 each contribute to the Mn(2+) site.

The protein belongs to the arginase family. Mn(2+) serves as cofactor.

The catalysed reaction is N-formimidoyl-L-glutamate + H2O = formamide + L-glutamate. It participates in amino-acid degradation; L-histidine degradation into L-glutamate; L-glutamate from N-formimidoyl-L-glutamate (hydrolase route): step 1/1. Its function is as follows. Catalyzes the conversion of N-formimidoyl-L-glutamate to L-glutamate and formamide. The sequence is that of Formimidoylglutamase from Salmonella enteritidis PT4 (strain P125109).